Reading from the N-terminus, the 275-residue chain is uncharacterized protein (275 aa).

NAD(+) contacts are provided by residues 20–22, 41–42, 80–81, and asparagine 107; these read RGQ, DI, and DV. Substrate is bound at residue serine 160. Tyrosine 173 (proton acceptor) is an active-site residue. NAD(+)-binding positions include lysine 177 and 206–208; that span reads VET.

Belongs to the short-chain dehydrogenases/reductases (SDR) family.

This is an uncharacterized protein from Mycolicibacterium paratuberculosis (strain ATCC BAA-968 / K-10) (Mycobacterium paratuberculosis).